A 100-amino-acid chain; its full sequence is Urease subunit gamma (100 aa).

It belongs to the urease gamma subunit family. As to quaternary structure, heterotrimer of UreA (gamma), UreB (beta) and UreC (alpha) subunits. Three heterotrimers associate to form the active enzyme.

It localises to the cytoplasm. It carries out the reaction urea + 2 H2O + H(+) = hydrogencarbonate + 2 NH4(+). Its pathway is nitrogen metabolism; urea degradation; CO(2) and NH(3) from urea (urease route): step 1/1. The protein is Urease subunit gamma of Rhodopseudomonas palustris (strain BisB18).